Reading from the N-terminus, the 242-residue chain is 3-dehydroquinate dehydratase (242 aa).

3-dehydroquinate is bound by residues 39–41 and Arg73; that span reads EIR. The active-site Proton donor/acceptor is His135. Lys162 (schiff-base intermediate with substrate) is an active-site residue. Residues Arg203 and Gln228 each contribute to the 3-dehydroquinate site.

The protein belongs to the type-I 3-dehydroquinase family. As to quaternary structure, homodimer.

The enzyme catalyses 3-dehydroquinate = 3-dehydroshikimate + H2O. Its pathway is metabolic intermediate biosynthesis; chorismate biosynthesis; chorismate from D-erythrose 4-phosphate and phosphoenolpyruvate: step 3/7. Its function is as follows. Involved in the third step of the chorismate pathway, which leads to the biosynthesis of aromatic amino acids. Catalyzes the cis-dehydration of 3-dehydroquinate (DHQ) and introduces the first double bond of the aromatic ring to yield 3-dehydroshikimate. This Methanosarcina barkeri (strain Fusaro / DSM 804) protein is 3-dehydroquinate dehydratase.